Reading from the N-terminus, the 408-residue chain is Bone morphogenetic protein 4 (408 aa).

Residues 1–19 (MIPGNRMLMVVLLCQVLLG) form the signal peptide. The propeptide occupies 20–292 (GASHASLIPE…HTLTRRRAKR (273 aa)). S91 is modified (phosphoserine). Residues 91-111 (SGEEEEEEQSQGTGLEYPERP) form a disordered region. N-linked (GlcNAc...) asparagine glycosylation is found at N144 and N209. Positions 281–307 (RGHTLTRRRAKRSPKHHPQRSRKKNKN) are disordered. The segment covering 284–307 (TLTRRRAKRSPKHHPQRSRKKNKN) has biased composition (basic residues). 3 disulfides stabilise this stretch: C308–C373, C337–C405, and C341–C407. Residues N350 and N365 are each glycosylated (N-linked (GlcNAc...) asparagine).

It belongs to the TGF-beta family. In terms of assembly, homodimer; disulfide-linked. Interacts with SOSTDC1, GREM2, RGMA, RGMB and RGMC. Part of a complex consisting of TWSG1 and CHRD. Interacts with the serine proteases, HTRA1 and HTRA3; the interaction with either inhibits BMP4-mediated signaling. The HTRA protease activity is required for this inhibition. Interacts with FBN1 (via N-terminal domain) and FBN2. Interacts with type I receptor BMPR1A. Interacts with type II receptor BMPR2. Interacts with FSTL1; this interaction inhibits the activation of the BMP4/Smad1/5/8 signaling pathway. Interacts with SCUBE3. Interacts with TGFBR3. In terms of tissue distribution, in the cochlea, detected in nonprosensory regions and outer sulcus (at protein level). Prior to gastrulation, expressed in the extraembryonic ectoderm. Later, expressed in the extraembryonic mesoderm.

The protein localises to the secreted. It is found in the extracellular space. Its subcellular location is the extracellular matrix. Growth factor of the TGF-beta superfamily that plays essential roles in many developmental processes, including neurogenesis, vascular development, angiogenesis and osteogenesis. Acts in concert with PTHLH/PTHRP to stimulate ductal outgrowth during embryonic mammary development and to inhibit hair follicle induction. Initiates the canonical BMP signaling cascade by associating with type I receptor BMPR1A and type II receptor BMPR2. Once all three components are bound together in a complex at the cell surface, BMPR2 phosphorylates and activates BMPR1A. In turn, BMPR1A propagates signal by phosphorylating SMAD1/5/8 that travel to the nucleus and act as activators and repressors of transcription of target genes. Positively regulates the expression of odontogenic development regulator MSX1 via inducing the IPO7-mediated import of SMAD1 to the nucleus. Required for MSX1-mediated mesenchymal molar tooth bud development beyond the bud stage, via promoting Wnt signaling. Acts as a positive regulator of odontoblast differentiation during mesenchymal tooth germ formation, expression is repressed during the bell stage by MSX1-mediated inhibition of CTNNB1 signaling. Able to induce its own expression in dental mesenchymal cells and also in the neighboring dental epithelial cells via an MSX1-mediated pathway. Can also signal through non-canonical BMP pathways such as ERK/MAP kinase, PI3K/Akt or SRC cascades. For example, induces SRC phosphorylation which, in turn, activates VEGFR2, leading to an angiogenic response. This Mus musculus (Mouse) protein is Bone morphogenetic protein 4.